We begin with the raw amino-acid sequence, 467 residues long: F-box protein pof9 (467 aa).

The F-box domain occupies 3–49; the sequence is KSPFLELSYDILLEISTYLDYKDIVHLSETCKSLSYVFDDKTIWHRF. RCC1 repeat units follow at residues 77-131, 302-354, and 355-417; these read RGYA…LLNE, ETFT…YLTS, and DHSI…AAGG.

As to quaternary structure, interacts with skp1.

It is found in the cytoplasm. Its subcellular location is the nucleus. The polypeptide is F-box protein pof9 (pof9) (Schizosaccharomyces pombe (strain 972 / ATCC 24843) (Fission yeast)).